Reading from the N-terminus, the 492-residue chain is MAVASRLAVARVAPDGGAAGRRRRRGRPVVAVPTAGRGRGGAVAASPPTEEAVQMTEPLTKEDLVAYLVSGCKPKENWRIGTEHEKFGFEVDTLRPIKYDQIRDILNGLAERFDWDKIVEENNVIGLKQGKQSISLEPGGQFELSGAPLETLHQTCAEVNSHLYQVKAVGEEMGIGFLGIGFQPKWALSDIPIMPKGRYEIMRNYMPKVGSLGLDMMFRTCTVQVNLDFSSEQDMIRKFRTGLALQPIATAIFANSPFKEGKPNGYLSLRSHIWTDTDNNRSGMLPFVFDDSFGFERYVDYALDIPMYFVYRNKKYIDCTGMSFRDFMVGKLPQAPGELPTLNDWENHLTTIFPEVRLKRYLEMRGADGGPWRRLCALPVFWVGLLYDEESLQSISDMTSDWTNEEREMLRRKVPVTGLKTPFRDGYVRDLAEEILQLSKNGLERRGYKEVGFLREVDAVISSGVTPAERLLNLYETKWQRSVDPVFQELLY.

Cys156 and Cys376 are oxidised to a cystine.

The protein belongs to the carboxylate-amine ligase family. Glutamate--cysteine ligase type 2 subfamily. In terms of assembly, homodimer or monomer when oxidized or reduced, respectively. Post-translationally, the Cys-156-Cys-376 disulfide bridge is known to modulate the enzyme activity according to the redox status. The oxidized form constitutes the active enzyme.

It localises to the plastid. Its subcellular location is the chloroplast. The enzyme catalyses L-cysteine + L-glutamate + ATP = gamma-L-glutamyl-L-cysteine + ADP + phosphate + H(+). It participates in sulfur metabolism; glutathione biosynthesis; glutathione from L-cysteine and L-glutamate: step 1/2. The protein is Glutamate--cysteine ligase A, chloroplastic (GSH1-1) of Oryza sativa subsp. japonica (Rice).